The sequence spans 176 residues: Inner membrane-spanning protein YciB (176 aa).

5 helical membrane-spanning segments follow: residues 23–43, 50–70, 74–94, 119–139, and 150–170; these read MIAAAAVALVAGVVQAAFLYW, TMQWVGLVLIVVFGGATIVLG, FIMWKPTVLFWCGALFLLGSH, LTYMWVGFLIFMGIANWFVFT, and MFGSTALMLFFFIIQGIYLST.

The protein belongs to the YciB family.

The protein localises to the cell inner membrane. Functionally, plays a role in cell envelope biogenesis, maintenance of cell envelope integrity and membrane homeostasis. The sequence is that of Inner membrane-spanning protein YciB from Neisseria gonorrhoeae (strain ATCC 700825 / FA 1090).